The following is a 559-amino-acid chain: Beta-glucuronidase (559 aa).

A signal peptide spans 1-19 (MKRILGLIAYASVPTVINA). Residues Asn53, Asn91, Asn99, and Asn143 are each glycosylated (N-linked (GlcNAc...) asparagine). Catalysis depends on Glu194, which acts as the Proton donor. Asn203, Asn222, and Asn280 each carry an N-linked (GlcNAc...) asparagine glycan. Glu312 functions as the Nucleophile in the catalytic mechanism. Residues Asn427, Asn440, Asn465, Asn491, and Asn520 are each glycosylated (N-linked (GlcNAc...) asparagine).

Belongs to the glycosyl hydrolase 79 family.

Its subcellular location is the secreted. The catalysed reaction is a beta-D-glucuronoside + H2O = D-glucuronate + an alcohol. In terms of biological role, beta-glucuronidase that hydrolyzes beta-glucuronosyl and 4-O-methyl-beta-glucuronosyl residues of arabinogalactan-protein. Hydrolyzed heparan sulfate only very weakly. Has no activity on xylan from birchwood. Able to catalyze the transglycosylation of glucuronic acid (GlcA) residues from p-nitrophenyl-beta-glucuronic acid (PNP beta-GlcA) to various monosaccharide acceptors such as glucose, galactose and xylose. The sequence is that of Beta-glucuronidase from Neurospora crassa (strain ATCC 24698 / 74-OR23-1A / CBS 708.71 / DSM 1257 / FGSC 987).